A 164-amino-acid chain; its full sequence is NADH-quinone oxidoreductase subunit I (164 aa).

2 4Fe-4S ferredoxin-type domains span residues 56-85 and 95-124; these read RRYESGEERCIACKLCEAICPAQAITIEAE and TRYDIDMTKCIYCGFCQEACPVDAIVEGPN. [4Fe-4S] cluster contacts are provided by cysteine 65, cysteine 68, cysteine 71, cysteine 75, cysteine 104, cysteine 107, cysteine 110, and cysteine 114.

Belongs to the complex I 23 kDa subunit family. In terms of assembly, NDH-1 is composed of 14 different subunits. Subunits NuoA, H, J, K, L, M, N constitute the membrane sector of the complex. Requires [4Fe-4S] cluster as cofactor.

The protein resides in the cell inner membrane. It catalyses the reaction a quinone + NADH + 5 H(+)(in) = a quinol + NAD(+) + 4 H(+)(out). In terms of biological role, NDH-1 shuttles electrons from NADH, via FMN and iron-sulfur (Fe-S) centers, to quinones in the respiratory chain. The immediate electron acceptor for the enzyme in this species is believed to be ubiquinone. Couples the redox reaction to proton translocation (for every two electrons transferred, four hydrogen ions are translocated across the cytoplasmic membrane), and thus conserves the redox energy in a proton gradient. The chain is NADH-quinone oxidoreductase subunit I from Anaplasma phagocytophilum (strain HZ).